We begin with the raw amino-acid sequence, 559 residues long: 2,3-bisphosphoglycerate-independent phosphoglycerate mutase (559 aa).

Mn(2+)-binding residues include D28 and S81. S81 serves as the catalytic Phosphoserine intermediate. Substrate contacts are provided by residues H140, 170–171 (RD), R206, R213, 286–289 (RADR), and K361. Positions 430, 434, 471, 472, and 501 each coordinate Mn(2+).

Belongs to the BPG-independent phosphoglycerate mutase family. In terms of assembly, monomer. It depends on Mn(2+) as a cofactor. Post-translationally, the N-terminus is blocked. As to expression, found ubiquitously in germinating seed.

It is found in the cytoplasm. The enzyme catalyses (2R)-2-phosphoglycerate = (2R)-3-phosphoglycerate. The protein operates within carbohydrate degradation; glycolysis; pyruvate from D-glyceraldehyde 3-phosphate: step 3/5. In terms of biological role, catalyzes the interconversion of 2-phosphoglycerate and 3-phosphoglycerate. The sequence is that of 2,3-bisphosphoglycerate-independent phosphoglycerate mutase from Zea mays (Maize).